Reading from the N-terminus, the 209-residue chain is Kynurenine formamidase (209 aa).

A substrate-binding site is contributed by Trp-18. The Zn(2+) site is built by His-48, His-52, and Asp-54. His-58 acts as the Proton donor/acceptor in catalysis. Residues His-160 and Glu-172 each coordinate Zn(2+).

This sequence belongs to the Cyclase 1 superfamily. KynB family. As to quaternary structure, homodimer. It depends on Zn(2+) as a cofactor.

It catalyses the reaction N-formyl-L-kynurenine + H2O = L-kynurenine + formate + H(+). The protein operates within amino-acid degradation; L-tryptophan degradation via kynurenine pathway; L-kynurenine from L-tryptophan: step 2/2. Functionally, catalyzes the hydrolysis of N-formyl-L-kynurenine to L-kynurenine, the second step in the kynurenine pathway of tryptophan degradation. The chain is Kynurenine formamidase from Sphingopyxis alaskensis (strain DSM 13593 / LMG 18877 / RB2256) (Sphingomonas alaskensis).